The following is a 214-amino-acid chain: Putative archaetidylserine decarboxylase proenzyme (214 aa).

Ser-180 serves as the catalytic Schiff-base intermediate with substrate; via pyruvic acid. Ser-180 is modified (pyruvic acid (Ser); by autocatalysis).

Belongs to the phosphatidylserine decarboxylase family. PSD-A subfamily. Heterodimer of a large membrane-associated beta subunit and a small pyruvoyl-containing alpha subunit. It depends on pyruvate as a cofactor. Post-translationally, is synthesized initially as an inactive proenzyme. Formation of the active enzyme involves a self-maturation process in which the active site pyruvoyl group is generated from an internal serine residue via an autocatalytic post-translational modification. Two non-identical subunits are generated from the proenzyme in this reaction, and the pyruvate is formed at the N-terminus of the alpha chain, which is derived from the carboxyl end of the proenzyme. The post-translation cleavage follows an unusual pathway, termed non-hydrolytic serinolysis, in which the side chain hydroxyl group of the serine supplies its oxygen atom to form the C-terminus of the beta chain, while the remainder of the serine residue undergoes an oxidative deamination to produce ammonia and the pyruvoyl prosthetic group on the alpha chain.

Its subcellular location is the cell membrane. The catalysed reaction is archaetidylserine + H(+) = archaetidylethanolamine + CO2. Its function is as follows. Catalyzes the formation of archaetidylethanolamine (PtdEtn) from archaetidylserine (PtdSer). In Methanopyrus kandleri (strain AV19 / DSM 6324 / JCM 9639 / NBRC 100938), this protein is Putative archaetidylserine decarboxylase proenzyme.